The following is a 234-amino-acid chain: Ubiquitin domain-containing protein 2 (234 aa).

Residues 1–46 (MGGCVGAQHDSSGSLNENSEGTGVALGRNQPLKKEKPKWKSDYPMT) form a disordered region. A compositionally biased stretch (polar residues) spans 9-21 (HDSSGSLNENSEG). Positions 32–41 (LKKEKPKWKS) are enriched in basic and acidic residues. The Ubiquitin-like domain maps to 152–227 (SQLRLRLSTG…VQVIMSQPLQ (76 aa)).

Its subcellular location is the cytoplasm. The polypeptide is Ubiquitin domain-containing protein 2 (UBTD2) (Bos taurus (Bovine)).